We begin with the raw amino-acid sequence, 284 residues long: 2-dehydro-3-deoxyphosphooctonate aldolase (284 aa).

It belongs to the KdsA family.

The protein localises to the cytoplasm. The enzyme catalyses D-arabinose 5-phosphate + phosphoenolpyruvate + H2O = 3-deoxy-alpha-D-manno-2-octulosonate-8-phosphate + phosphate. It functions in the pathway carbohydrate biosynthesis; 3-deoxy-D-manno-octulosonate biosynthesis; 3-deoxy-D-manno-octulosonate from D-ribulose 5-phosphate: step 2/3. Its pathway is bacterial outer membrane biogenesis; lipopolysaccharide biosynthesis. This Escherichia coli O6:K15:H31 (strain 536 / UPEC) protein is 2-dehydro-3-deoxyphosphooctonate aldolase.